The chain runs to 129 residues: UPF0212 protein Mbar_A2902 (129 aa).

It belongs to the UPF0212 family.

The chain is UPF0212 protein Mbar_A2902 from Methanosarcina barkeri (strain Fusaro / DSM 804).